The chain runs to 246 residues: Mitochondrial inner membrane protease ATP23 homolog (246 aa).

His125 is a binding site for a divalent metal cation. Residue Glu126 is part of the active site. His129 contacts a divalent metal cation.

This sequence belongs to the peptidase M76 family. As to quaternary structure, interacts with XRCC6.

The polypeptide is Mitochondrial inner membrane protease ATP23 homolog (Homo sapiens (Human)).